Here is a 517-residue protein sequence, read N- to C-terminus: MSTLANLTEVLFRLDFDPDTAVYHYRGQTLSRLQCRTYILSQASQLARLLKPGDRVVLALNDSPSLACLFLACIAVGAIPAVINPKSREQALADIAADCQASLVVREADAPSLSGPLAPLTLRAAAGRPLLDDFSLDALVGPADLDWSAFHRQDPAAACFLQYTSGSTGAPKGVMHSLRNTLGFCRAFATELLALQAGDRLYSIPKMFFGYGMGNSLFFPWFSGASALLDDTWPSPERVLENLVAFRPRVLFGVPAIYASLRPQARELLSSVRLAFSAGSPLPRGEFEFWAAHGLEICDGIGATEVGHVFLANRPGQARADSTGLPLPGYECRLVDREGHTIEEAGRQGVLLVRGPGLSPGYWRASEEQQARFAGGWYRTGDLFERDESGAYRHCGREDDLFKVNGRWVVPTQVEQAICRHLPEVSEAVLVPTCRLHDGLRPTLFVTLATPLDDNQILLAQRIDQHLAEQIPSHMLPSQLHVLPALPRNDNGKLARAELRHLADTLYHDNLPEERAC.

161 to 172 (LQYTSGSTGAPK) serves as a coordination point for AMP.

Belongs to the ATP-dependent AMP-binding enzyme family. As to quaternary structure, monomer.

It carries out the reaction anthranilate + ATP + CoA = anthraniloyl-CoA + AMP + diphosphate. Functionally, catalyzes the formation of anthraniloyl-CoA, which is the priming step for entry into the Pseudomonas quinolone signal (PQS) biosynthetic pathway. Also active on a variety of aromatic substrates, including benzoate and chloro and fluoro derivatives of anthranilate. This is Anthranilate--CoA ligase (pqsA) from Pseudomonas aeruginosa (strain ATCC 15692 / DSM 22644 / CIP 104116 / JCM 14847 / LMG 12228 / 1C / PRS 101 / PAO1).